A 126-amino-acid polypeptide reads, in one-letter code: MDKTLKFTDSHEWVRDNGDGTATIGISEHAQEMLGDVVFVDLPDVEDEVEAGESFSLVESVKAASDIYSPITGEVVEINEELEDSPELINEEPYEGGWIVKVKLSDPSELDDLKDAEEYLSSIEEE.

Positions 21–103 (TATIGISEHA…YEGGWIVKVK (83 aa)) constitute a Lipoyl-binding domain. Residue K62 is modified to N6-lipoyllysine.

It belongs to the GcvH family. In terms of assembly, the glycine cleavage system is composed of four proteins: P, T, L and H. Requires (R)-lipoate as cofactor.

Its function is as follows. The glycine cleavage system catalyzes the degradation of glycine. The H protein shuttles the methylamine group of glycine from the P protein to the T protein. The sequence is that of Glycine cleavage system H protein from Vibrio campbellii (strain ATCC BAA-1116).